Here is a 353-residue protein sequence, read N- to C-terminus: Photosystem II protein D1 (353 aa).

Threonine 2 carries the N-acetylthreonine modification. Threonine 2 is subject to Phosphothreonine. 3 helical membrane-spanning segments follow: residues 29–46 (YIGW…TATS), 118–133 (HFLL…EWEL), and 142–156 (WIAV…AATA). Histidine 118 serves as a coordination point for chlorophyll a. Pheophytin a is bound at residue tyrosine 126. Aspartate 170 and glutamate 189 together coordinate [CaMn4O5] cluster. A helical membrane pass occupies residues 197–218 (FHMLGVAGVFGGSLFSAMHGSL). Histidine 198 is a chlorophyll a binding site. A quinone contacts are provided by residues histidine 215 and 264-265 (SF). Histidine 215 contacts Fe cation. Histidine 272 serves as a coordination point for Fe cation. Residues 274 to 288 (FLAAWPVVGIWFTAL) traverse the membrane as a helical segment. The [CaMn4O5] cluster site is built by histidine 332, glutamate 333, and alanine 344. Residues 345 to 353 (AIEAPAVNG) constitute a propeptide that is removed on maturation.

The protein belongs to the reaction center PufL/M/PsbA/D family. In terms of assembly, PSII is composed of 1 copy each of membrane proteins PsbA, PsbB, PsbC, PsbD, PsbE, PsbF, PsbH, PsbI, PsbJ, PsbK, PsbL, PsbM, PsbT, PsbX, PsbY, PsbZ, Psb30/Ycf12, at least 3 peripheral proteins of the oxygen-evolving complex and a large number of cofactors. It forms dimeric complexes. It depends on The D1/D2 heterodimer binds P680, chlorophylls that are the primary electron donor of PSII, and subsequent electron acceptors. It shares a non-heme iron and each subunit binds pheophytin, quinone, additional chlorophylls, carotenoids and lipids. D1 provides most of the ligands for the Mn4-Ca-O5 cluster of the oxygen-evolving complex (OEC). There is also a Cl(-1) ion associated with D1 and D2, which is required for oxygen evolution. The PSII complex binds additional chlorophylls, carotenoids and specific lipids. as a cofactor. In terms of processing, tyr-161 forms a radical intermediate that is referred to as redox-active TyrZ, YZ or Y-Z. Post-translationally, C-terminally processed by CTPA; processing is essential to allow assembly of the oxygen-evolving complex and thus photosynthetic growth.

The protein resides in the plastid. The protein localises to the chloroplast thylakoid membrane. The enzyme catalyses 2 a plastoquinone + 4 hnu + 2 H2O = 2 a plastoquinol + O2. Photosystem II (PSII) is a light-driven water:plastoquinone oxidoreductase that uses light energy to abstract electrons from H(2)O, generating O(2) and a proton gradient subsequently used for ATP formation. It consists of a core antenna complex that captures photons, and an electron transfer chain that converts photonic excitation into a charge separation. The D1/D2 (PsbA/PsbD) reaction center heterodimer binds P680, the primary electron donor of PSII as well as several subsequent electron acceptors. The chain is Photosystem II protein D1 from Conocephalum japonicum (Liverwort).